A 167-amino-acid chain; its full sequence is NADH-ubiquinone oxidoreductase chain 4 (167 aa).

The next 3 helical transmembrane spans lie at 2 to 22 (FIGATTLMIAHGLTSSLLFCL), 44 to 64 (LLPLAATWWLLASLTNLALPP), and 86 to 106 (IILVGLNTLITALYSLYMLIM).

The protein belongs to the complex I subunit 4 family.

It is found in the mitochondrion membrane. The enzyme catalyses a ubiquinone + NADH + 5 H(+)(in) = a ubiquinol + NAD(+) + 4 H(+)(out). Functionally, core subunit of the mitochondrial membrane respiratory chain NADH dehydrogenase (Complex I) that is believed to belong to the minimal assembly required for catalysis. Complex I functions in the transfer of electrons from NADH to the respiratory chain. The immediate electron acceptor for the enzyme is believed to be ubiquinone. This Carlito syrichta (Philippine tarsier) protein is NADH-ubiquinone oxidoreductase chain 4 (MT-ND4).